The sequence spans 199 residues: uncharacterized protein (199 aa).

Residues 1–28 form the signal peptide; that stretch reads MKKLATVGSLIVTSTLVFSSMPFQNAHA.

It localises to the secreted. This is an uncharacterized protein from Staphylococcus aureus (strain NCTC 8325 / PS 47).